We begin with the raw amino-acid sequence, 1822 residues long: Integrin beta-4 (1822 aa).

Residues 1–27 form the signal peptide; sequence MAGPRPSPWARLLLAALISVSLSGTLA. At 28-710 the chain is on the extracellular side; it reads NRCKKAPVKS…HKKKDCPPGS (683 aa). Positions 29-73 constitute a PSI domain; that stretch reads RCKKAPVKSCTECVRVDKDCAYCTDEMFRDRRCNTQAELLAAGCQ. 8 disulfide bridges follow: Cys-30–Cys-48, Cys-38–Cys-455, Cys-41–Cys-61, Cys-51–Cys-72, Cys-245–Cys-288, Cys-457–Cys-476, Cys-468–Cys-479, and Cys-481–Cys-490. The region spanning 131-329 is the VWFA domain; the sequence is DLYILMDFSN…IPIFAVTNYS (199 aa). Positions 139 and 141 each coordinate Mg(2+). Ca(2+) is bound by residues Ser-141, Asp-144, Asp-145, and Asp-176. The involved in NRG1- and IGF1-binding stretch occupies residues 194-199; the sequence is WPNSDP. The Ca(2+) site is built by Asn-228, Asp-230, Pro-232, and Glu-233. Mg(2+) is bound at residue Glu-233. Asn-327 carries an N-linked (GlcNAc...) asparagine glycan. Ca(2+) is bound at residue Glu-350. I-EGF domains follow at residues 457–491, 492–537, 538–574, and 575–615; these read CELQ…QTCN, CSTG…QFCE, YDNF…PSCD, and CPLS…TICE. An N-linked (GlcNAc...) asparagine glycan is attached at Asn-491. 11 disulfides stabilise this stretch: Cys-492–Cys-520, Cys-503–Cys-518, Cys-512–Cys-523, Cys-525–Cys-536, Cys-543–Cys-557, Cys-551–Cys-562, Cys-564–Cys-573, Cys-575–Cys-598, Cys-582–Cys-596, Cys-590–Cys-601, and Cys-603–Cys-614. N-linked (GlcNAc...) asparagine glycosylation is present at Asn-579. Asn-617 carries N-linked (GlcNAc...) asparagine glycosylation. Intrachain disulfides connect Cys-626–Cys-671, Cys-632–Cys-651, Cys-635–Cys-648, and Cys-680–Cys-706. Asn-695 carries an N-linked (GlcNAc...) asparagine glycan. Residues 711-733 traverse the membrane as a helical segment; the sequence is FWWLIPLLLLLLPLLALLLLLCW. Residues 732–749 are palmitoylated on several cysteines; that stretch reads CWKYCACCKACLALLPCC. Residues 734 to 1822 lie on the Cytoplasmic side of the membrane; sequence KYCACCKACL…THMDQQFFQT (1089 aa). Residues Ser-771, Ser-1069, and Ser-1119 each carry the phosphoserine modification. Positions 979-1084 constitute a Calx-beta domain; it reads VNITIIKEQA…QVRRFHVQLS (106 aa). The disordered stretch occupies residues 1113 to 1140; the sequence is TSQMLSSQPPPHGDLGAPQNPNAKAAGS. Fibronectin type-III domains are found at residues 1129-1218 and 1222-1321; these read APQN…THQE and EPGR…TQPK. Residues 1400–1444 form a disordered region; sequence LSASSGRSSDAEAPHGPPDDGGAGGKGGSLPRSATPGPPGEHLVN. Residues 1418-1427 show a composition bias toward gly residues; sequence DDGGAGGKGG. A phosphoserine mark is found at Ser-1454, Ser-1457, and Ser-1474. Phosphothreonine is present on Thr-1487. Ser-1494 carries the post-translational modification Phosphoserine. The interval 1495 to 1525 is disordered; it reads LTRSEHSHSTTLPRDYSTLTSVSSHDSRLTA. Positions 1503–1518 are enriched in polar residues; sequence STTLPRDYSTLTSVSS. The residue at position 1530 (Thr-1530) is a Phosphothreonine. 2 Fibronectin type-III domains span residues 1530-1625 and 1643-1739; these read TPTR…VHPQ and APGP…SQDG. Ser-1791 carries the phosphoserine modification.

The protein belongs to the integrin beta chain family. In terms of assembly, heterodimer of an alpha and a beta subunit. Beta-4 associates with alpha-6. Interacts (via cytoplasmic region) with COL17A1 (via cytoplasmic region). Interacts (via cytoplasmic region) with DST isoform 3 (via N-terminus). Isoform beta-4a interacts (via cytoplasmic domain) with DST (via N-terminus). Interacts with RAC1. ITGA6:ITGB4 is found in a ternary complex with NRG1 and ERBB3. ITGA6:ITGB4 is found in a ternary complex with IGF1 and IGF1R. ITGA6:ITGB4 interacts with IGF2. Interacts with TMEM268; this interaction prevents ITGB4 degradation. In terms of processing, palmitoylated by DHHC3 at several cysteines of the membrane-proximal region, enhancing stability and cell surface expression. Palmitoylation also promotes secondary association with tertaspanins. Integrin alpha-6/beta-4 is predominantly expressed by epithelia. Isoform beta-4D is also expressed in colon and placenta. Isoform beta-4E is also expressed in epidermis, lung, duodenum, heart, spleen and stomach.

It localises to the cell membrane. The protein resides in the cell junction. Its subcellular location is the hemidesmosome. Its function is as follows. Integrin alpha-6/beta-4 is a receptor for laminin. Plays a critical structural role in the hemidesmosome of epithelial cells. Is required for the regulation of keratinocyte polarity and motility. ITGA6:ITGB4 binds to NRG1 (via EGF domain) and this binding is essential for NRG1-ERBB signaling. ITGA6:ITGB4 binds to IGF1 and this binding is essential for IGF1 signaling. ITGA6:ITGB4 binds to IGF2 and this binding is essential for IGF2 signaling. This Homo sapiens (Human) protein is Integrin beta-4 (ITGB4).